Reading from the N-terminus, the 302-residue chain is Recombination-associated protein RdgC (302 aa).

It belongs to the RdgC family.

It localises to the cytoplasm. It is found in the nucleoid. Functionally, may be involved in recombination. The protein is Recombination-associated protein RdgC of Halorhodospira halophila (strain DSM 244 / SL1) (Ectothiorhodospira halophila (strain DSM 244 / SL1)).